Consider the following 153-residue polypeptide: Lipoprotein signal peptidase (153 aa).

2 helical membrane-spanning segments follow: residues 61-81 (YFFVILTVLVIGAALFYLVKN) and 85-105 (SLWLVLSLILIISGGIGNFID). Active-site residues include Asp-114 and Asp-130. The helical transmembrane segment at 125–145 (IFNVADSYLTVGVLLLILILW) threads the bilayer.

The protein belongs to the peptidase A8 family.

It is found in the cell membrane. The catalysed reaction is Release of signal peptides from bacterial membrane prolipoproteins. Hydrolyzes -Xaa-Yaa-Zaa-|-(S,diacylglyceryl)Cys-, in which Xaa is hydrophobic (preferably Leu), and Yaa (Ala or Ser) and Zaa (Gly or Ala) have small, neutral side chains.. It functions in the pathway protein modification; lipoprotein biosynthesis (signal peptide cleavage). Functionally, this protein specifically catalyzes the removal of signal peptides from prolipoproteins. The sequence is that of Lipoprotein signal peptidase from Streptococcus thermophilus (strain CNRZ 1066).